A 104-amino-acid polypeptide reads, in one-letter code: MTKSELIARLSERLAERNSQLVYKDAELAVKTILDAMANNLAQGSRIEIRGFGSFDLNYRPPRVGRNPKSGASVSVPEKYVPHFKAGKELRERVDLSLLEQTQA.

Belongs to the bacterial histone-like protein family. In terms of assembly, heterodimer of an alpha and a beta chain.

Functionally, this protein is one of the two subunits of integration host factor, a specific DNA-binding protein that functions in genetic recombination as well as in transcriptional and translational control. This is Integration host factor subunit beta from Chromobacterium violaceum (strain ATCC 12472 / DSM 30191 / JCM 1249 / CCUG 213 / NBRC 12614 / NCIMB 9131 / NCTC 9757 / MK).